A 369-amino-acid polypeptide reads, in one-letter code: Chorismate synthase (369 aa).

NADP(+) contacts are provided by R48 and R54. Residues 125–127, 238–239, G278, 293–297, and R319 each bind FMN; these read RSS, NA, and KPTSS.

The protein belongs to the chorismate synthase family. Homotetramer. The cofactor is FMNH2.

It carries out the reaction 5-O-(1-carboxyvinyl)-3-phosphoshikimate = chorismate + phosphate. Its pathway is metabolic intermediate biosynthesis; chorismate biosynthesis; chorismate from D-erythrose 4-phosphate and phosphoenolpyruvate: step 7/7. Catalyzes the anti-1,4-elimination of the C-3 phosphate and the C-6 proR hydrogen from 5-enolpyruvylshikimate-3-phosphate (EPSP) to yield chorismate, which is the branch point compound that serves as the starting substrate for the three terminal pathways of aromatic amino acid biosynthesis. This reaction introduces a second double bond into the aromatic ring system. The sequence is that of Chorismate synthase from Nitrosococcus oceani (strain ATCC 19707 / BCRC 17464 / JCM 30415 / NCIMB 11848 / C-107).